The chain runs to 198 residues: Recombination protein RecR (198 aa).

Residues cysteine 57–cysteine 72 form a C4-type zinc finger. One can recognise a Toprim domain in the interval glutamate 80 to alanine 175.

The protein belongs to the RecR family.

Functionally, may play a role in DNA repair. It seems to be involved in an RecBC-independent recombinational process of DNA repair. It may act with RecF and RecO. The protein is Recombination protein RecR of Streptococcus equi subsp. zooepidemicus (strain MGCS10565).